The sequence spans 428 residues: Serine--tRNA ligase (428 aa).

231–233 (TAE) contacts L-serine. 262 to 264 (RAE) serves as a coordination point for ATP. Residue Glu285 coordinates L-serine. An ATP-binding site is contributed by 349-352 (EISS). Ser385 is an L-serine binding site.

It belongs to the class-II aminoacyl-tRNA synthetase family. Type-1 seryl-tRNA synthetase subfamily. As to quaternary structure, homodimer. The tRNA molecule binds across the dimer.

Its subcellular location is the cytoplasm. It carries out the reaction tRNA(Ser) + L-serine + ATP = L-seryl-tRNA(Ser) + AMP + diphosphate + H(+). It catalyses the reaction tRNA(Sec) + L-serine + ATP = L-seryl-tRNA(Sec) + AMP + diphosphate + H(+). Its pathway is aminoacyl-tRNA biosynthesis; selenocysteinyl-tRNA(Sec) biosynthesis; L-seryl-tRNA(Sec) from L-serine and tRNA(Sec): step 1/1. In terms of biological role, catalyzes the attachment of serine to tRNA(Ser). Is also able to aminoacylate tRNA(Sec) with serine, to form the misacylated tRNA L-seryl-tRNA(Sec), which will be further converted into selenocysteinyl-tRNA(Sec). This Methylorubrum populi (strain ATCC BAA-705 / NCIMB 13946 / BJ001) (Methylobacterium populi) protein is Serine--tRNA ligase.